The chain runs to 429 residues: Ribosomal RNA small subunit methyltransferase B (429 aa).

S-adenosyl-L-methionine is bound by residues 254–260 (CAAPGGK), aspartate 277, aspartate 303, and aspartate 322. Cysteine 375 serves as the catalytic Nucleophile. The segment at 397 to 419 (ALSETGTPDQPGQQNLPGGEEGD) is disordered. Polar residues predominate over residues 400 to 412 (ETGTPDQPGQQNL).

It belongs to the class I-like SAM-binding methyltransferase superfamily. RsmB/NOP family.

It is found in the cytoplasm. It catalyses the reaction cytidine(967) in 16S rRNA + S-adenosyl-L-methionine = 5-methylcytidine(967) in 16S rRNA + S-adenosyl-L-homocysteine + H(+). Its function is as follows. Specifically methylates the cytosine at position 967 (m5C967) of 16S rRNA. The protein is Ribosomal RNA small subunit methyltransferase B of Salmonella choleraesuis (strain SC-B67).